Consider the following 1107-residue polypeptide: Probable chromatin-remodeling complex ATPase chain (1107 aa).

2 disordered regions span residues 1–124 (MAKP…KREK) and 177–217 (GNQS…GSGG). Acidic residues-rich tracts occupy residues 8–25 (DEEE…EEQS), 33–43 (GEEEDEEEEEA), 53–65 (GGEE…EEIE), and 89–114 (EGDE…DEAE). The stretch at 121-147 (KREKARLKEMQKLKKQKIQEILDTQNA) forms a coiled coil. Positions 183-193 (KKPRGRGRHAS) are enriched in basic residues. Residues 197–211 (EEEEDEEYLKEEEDA) show a composition bias toward acidic residues. The 166-residue stretch at 243–408 (IRLYENGING…WSLLNFLLPE (166 aa)) folds into the Helicase ATP-binding domain. 256-263 (DEMGLGKT) contacts ATP. The DEAH box signature appears at 359–362 (DEAH). In terms of domain architecture, Helicase C-terminal spans 536 to 687 (LLDKLLPKLK…ALVIQQGRLA (152 aa)). SANT domains lie at 877–929 (EGFA…ERYK) and 978–1039 (QNKG…DTLI). Positions 1029-1067 (QELARRCDTLIRLVEKENQEYDEQERQARKDKRMAKNMT) form a coiled coil. The segment at 1049–1107 (YDEQERQARKDKRMAKNMTPTKRSALRVSEGETTPSNSFKRRRQSLMDDYVGSGRRKRG) is disordered.

Belongs to the SNF2/RAD54 helicase family. ISWI subfamily.

It localises to the nucleus. Possesses intrinsic ATP-dependent nucleosome-remodeling activity. Constitutes the catalytic subunit of several complexes capable of forming ordered nucleosome arrays on chromatin in vitro. This chain is Probable chromatin-remodeling complex ATPase chain, found in Oryza sativa subsp. japonica (Rice).